We begin with the raw amino-acid sequence, 151 residues long: uncharacterized protein (151 aa).

The tract at residues 1–48 is disordered; the sequence is MRMAPTESTEGRRLWPGPREGGSGKETTSEKLSNLPRPHSYSPKRADA.

This is an uncharacterized protein from Homo sapiens (Human).